The primary structure comprises 175 residues: Ribosome maturation factor RimM (175 aa).

A PRC barrel domain is found at 100-173 (EGEYYFHEII…TIIIRPMEGL (74 aa)).

The protein belongs to the RimM family. As to quaternary structure, binds ribosomal protein uS19.

It is found in the cytoplasm. Functionally, an accessory protein needed during the final step in the assembly of 30S ribosomal subunit, possibly for assembly of the head region. Essential for efficient processing of 16S rRNA. May be needed both before and after RbfA during the maturation of 16S rRNA. It has affinity for free ribosomal 30S subunits but not for 70S ribosomes. The chain is Ribosome maturation factor RimM from Geobacillus kaustophilus (strain HTA426).